We begin with the raw amino-acid sequence, 243 residues long: Small ribosomal subunit protein uS3 (243 aa).

A KH type-2 domain is found at 39 to 107 (IRAYLIKELK…ETHLNIVEVR (69 aa)). Positions 214 to 243 (ASERRGLEGDAQGPASRERGDRPDRRRENA) are disordered. A compositionally biased stretch (basic and acidic residues) spans 229-243 (SRERGDRPDRRRENA).

The protein belongs to the universal ribosomal protein uS3 family. Part of the 30S ribosomal subunit. Forms a tight complex with proteins S10 and S14.

Its function is as follows. Binds the lower part of the 30S subunit head. Binds mRNA in the 70S ribosome, positioning it for translation. The protein is Small ribosomal subunit protein uS3 of Agrobacterium fabrum (strain C58 / ATCC 33970) (Agrobacterium tumefaciens (strain C58)).